Consider the following 555-residue polypeptide: Serine/threonine-protein kinase AGC1-7 (555 aa).

The tract at residues 1–126 (MLTKPGKKLD…PSKPHTGGDI (126 aa)) is disordered. Composition is skewed to basic and acidic residues over residues 7–16 (KKLDSSESTH) and 35–54 (PRKE…DNLI). Residues 84–118 (SQSNLNTKPNNNNSNNNSNMSSRSNSIESTSSNPS) are compositionally biased toward low complexity. Residues 146-480 (FRLLKRLGYG…ATEIKQHPFF (335 aa)) form the Protein kinase domain. ATP is bound by residues 152–160 (LGYGDIGSV) and Lys-175. Asp-271 (proton acceptor) is an active-site residue. The AGC-kinase C-terminal domain maps to 481 to 555 (EGVNWALIRS…DPDYIDFEYF (75 aa)). Residues 514–547 (AAVDGGGKKNNNGAGGGCSTGGGDNKPNGDCNDP) are disordered. Positions 526–537 (GAGGGCSTGGGD) are enriched in gly residues.

The protein belongs to the protein kinase superfamily. AGC Ser/Thr protein kinase family. In terms of assembly, interacts with PDPK1/PDK1. Autophosphorylated and phosphorylated by PDPK1/PDK1. In terms of tissue distribution, specifically expressed in pollen grains.

Its subcellular location is the cytoplasm. The catalysed reaction is L-seryl-[protein] + ATP = O-phospho-L-seryl-[protein] + ADP + H(+). The enzyme catalyses L-threonyl-[protein] + ATP = O-phospho-L-threonyl-[protein] + ADP + H(+). Its activity is regulated as follows. Activated by PDPK1/PDK1. Functions redudantly with AGC1-5 as signaling component in the pollen tube. Required for polarized growth of pollen tubes. This Arabidopsis thaliana (Mouse-ear cress) protein is Serine/threonine-protein kinase AGC1-7.